We begin with the raw amino-acid sequence, 126 residues long: Fluoride-specific ion channel FluC 2 (126 aa).

Helical transmembrane passes span 5 to 25, 44 to 64, 68 to 88, and 99 to 119; these read TALT…GSVL, GTLT…GLAL, AALL…TWML, and MVSA…AALL. Na(+)-binding residues include Gly78 and Thr81.

Belongs to the fluoride channel Fluc/FEX (TC 1.A.43) family.

It localises to the cell membrane. It catalyses the reaction fluoride(in) = fluoride(out). With respect to regulation, na(+) is not transported, but it plays an essential structural role and its presence is essential for fluoride channel function. Its function is as follows. Fluoride-specific ion channel. Important for reducing fluoride concentration in the cell, thus reducing its toxicity. The protein is Fluoride-specific ion channel FluC 2 of Mycobacterium bovis (strain ATCC BAA-935 / AF2122/97).